The chain runs to 257 residues: MLAKRIIPCLDVRDGQVVKGVQFRNHEIIGDIVPLAQRYAEEGADELVFYDITASSDGRVVDKSWVARVAEVIDIPFCVAGGIKSAEDAARILEFGADKVSINSPALANPQLITDLADKFGVQCIVVGIDSYYDKETGKYQVYQFTGDEERTKATQWETRDWVQEVQKRGAGEIVLNMMNQDGVRNGYDIKQLNMVREVCNVPLIASGGAGAMEHFAEAYQKANVDGALAASVFHKQVINIGELKQYLKQQGIEVRL.

Active-site residues include Asp11 and Asp130.

Belongs to the HisA/HisF family. As to quaternary structure, heterodimer of HisH and HisF.

It is found in the cytoplasm. It catalyses the reaction 5-[(5-phospho-1-deoxy-D-ribulos-1-ylimino)methylamino]-1-(5-phospho-beta-D-ribosyl)imidazole-4-carboxamide + L-glutamine = D-erythro-1-(imidazol-4-yl)glycerol 3-phosphate + 5-amino-1-(5-phospho-beta-D-ribosyl)imidazole-4-carboxamide + L-glutamate + H(+). It participates in amino-acid biosynthesis; L-histidine biosynthesis; L-histidine from 5-phospho-alpha-D-ribose 1-diphosphate: step 5/9. Its function is as follows. IGPS catalyzes the conversion of PRFAR and glutamine to IGP, AICAR and glutamate. The HisF subunit catalyzes the cyclization activity that produces IGP and AICAR from PRFAR using the ammonia provided by the HisH subunit. The polypeptide is Imidazole glycerol phosphate synthase subunit HisF (Vibrio campbellii (strain ATCC BAA-1116)).